The primary structure comprises 586 residues: Laccase-9 (586 aa).

The signal sequence occupies residues 1–25 (MPRVHHSLSNQAFLVLLLFSSIASA). 2 Plastocyanin-like domains span residues 33-149 (HVKD…PRSG) and 159-307 (KEVP…YEGA). 3 N-linked (GlcNAc...) asparagine glycosylation sites follow: asparagine 52, asparagine 74, and asparagine 79. Residues histidine 83 and histidine 85 each coordinate Cu cation. The N-linked (GlcNAc...) asparagine glycan is linked to asparagine 111. Cu cation-binding residues include histidine 128 and histidine 130. Asparagine 236, asparagine 333, asparagine 385, asparagine 403, and asparagine 451 each carry an N-linked (GlcNAc...) asparagine glycan. Positions 411 to 552 (DFPDQPPLKF…MMAFIVQNGP (142 aa)) constitute a Plastocyanin-like 3 domain. Cu cation is bound by residues histidine 469, histidine 472, histidine 474, histidine 531, cysteine 532, histidine 533, and histidine 537.

This sequence belongs to the multicopper oxidase family. It depends on Cu cation as a cofactor. In terms of tissue distribution, predominantly expressed in roots.

The protein localises to the secreted. It is found in the extracellular space. Its subcellular location is the apoplast. The catalysed reaction is 4 hydroquinone + O2 = 4 benzosemiquinone + 2 H2O. Functionally, lignin degradation and detoxification of lignin-derived products. The chain is Laccase-9 (LAC9) from Arabidopsis thaliana (Mouse-ear cress).